Consider the following 376-residue polypeptide: Polycomb group protein FIE1 (376 aa).

WD repeat units follow at residues 85-127 (DKDE…LLKT), 130-170 (GHGD…CILI), 176-216 (GHRN…PYVE), 242-279 (VHSN…QSPG), 291-332 (VPEC…PVLT), and 339-376 (QCKS…HPKA).

It belongs to the WD repeat ESC family. Interacts with EZ1. Component of the polycomb repressive complex 2 (PRC2), composed of the core PRC2 components EMF2B, EZ1 and CLF. PRC2 methylates 'Lys-27' residues of histone H3 (H3K27me3), leading to transcriptional repression of the affected target gene. In terms of tissue distribution, widely expressed.

Functionally, polycomb group (PcG) protein. PcG proteins act by forming multiprotein complexes, which are required to maintain the transcriptionally repressive state of homeotic genes throughout development. PcG proteins are not required to initiate repression, but to maintain it during later stages of development. They act via the methylation of histones, rendering chromatin heritably changed in its expressibility. Involved in the regulation of seed endosperm development, grain filling and seed dormancy. FIE2-containing PcG complex in seed endosperm regulates the expression of various transcription factors by trimethylation on histone H3 'Lys-27' (H3K27me3) of target genes. Involved in the overall expression regulation of a large number of nutrient metabolism genes. Involved in the regulation of seed endosperm development. Involved in the regulation of vegetative development, particularly in stem cell maintenance in the root system, where it maintains the suppression of key differentiation regulators. The sequence is that of Polycomb group protein FIE1 from Oryza sativa subsp. japonica (Rice).